The chain runs to 489 residues: MIPPHEFSAERVVFDALGVALSALPDDTPIAIAYSGGLDSTVLLHAAARIAGAGRCIALHVHHGLSANADAWLAHCAETAQALGARFDAARVDVPRASGQGIEASARDARYRALETMCARYGARTLWLAQHADDQAETVLLQLLRGAGIAGLAAMAPQYRPALADVVRMRPLLHLLRAQLERYAQQHALRWIDDESNTDTRYARNALRVDVLPALAPHFPGFRDALARTAQHAAAAQRLLDDLAAIDLRAVARADVRVLSRDAFVALDDERGANLLRYWMRSLGLPGASAARLAEMVKQLRAARDAHALRVDHAGWRLRLYRDDVQWEAGDGAASEAARADVADDDAADARDDRADASAAARLPACALAWRGHEVWRLPGWRGSFVFSPVAAHEHDAVPEALLSSAALRACARAGGERMRTWQGGPGRTLKNLFQERGVPAWQRDVPLLYVGERLLFVPRIGVNRATHDGADAPGGWRRIEWRPDMLIA.

Residue serine 35–serine 40 coordinates ATP.

It belongs to the tRNA(Ile)-lysidine synthase family.

The protein localises to the cytoplasm. The catalysed reaction is cytidine(34) in tRNA(Ile2) + L-lysine + ATP = lysidine(34) in tRNA(Ile2) + AMP + diphosphate + H(+). Ligates lysine onto the cytidine present at position 34 of the AUA codon-specific tRNA(Ile) that contains the anticodon CAU, in an ATP-dependent manner. Cytidine is converted to lysidine, thus changing the amino acid specificity of the tRNA from methionine to isoleucine. The sequence is that of tRNA(Ile)-lysidine synthase from Burkholderia mallei (strain ATCC 23344).